Consider the following 130-residue polypeptide: Fluoride-specific ion channel FluC (130 aa).

4 helical membrane passes run 1–21, 36–56, 65–85, and 103–123; these read MGEI…RYGL, GTLI…QWGF, LKLM…TFSY, and ILAN…LGSL. 2 residues coordinate Na(+): Gly75 and Thr78.

The protein belongs to the fluoride channel Fluc/FEX (TC 1.A.43) family.

It is found in the cell membrane. It carries out the reaction fluoride(in) = fluoride(out). Its activity is regulated as follows. Na(+) is not transported, but it plays an essential structural role and its presence is essential for fluoride channel function. Fluoride-specific ion channel. Important for reducing fluoride concentration in the cell, thus reducing its toxicity. This chain is Fluoride-specific ion channel FluC, found in Dehalococcoides mccartyi (strain ATCC BAA-2266 / KCTC 15142 / 195) (Dehalococcoides ethenogenes (strain 195)).